The sequence spans 414 residues: GLABROUS1 enhancer-binding protein-like 3 (414 aa).

Disordered stretches follow at residues 36 to 57 (QLRT…LSSS) and 167 to 191 (QAKD…DRDV). Positions 38–50 (RTTTTRTTTTRTT) are enriched in low complexity. Residues 382-403 (LINEWKALFVDEQRLCVKKLTF) are non-canonical leucine-zipper.

It belongs to the GeBP family. Homo- and heterodimers. Interacts with GEBP, GPL1 and GPL2. Interacts with GEBP. In terms of tissue distribution, expressed in the apical meristem and young leaf primordia. Detected in the vascular tissues of rosette leaves, in primary and secondary roots and at the base of flowers and siliques.

The protein resides in the nucleus. Functionally, probable transcription factor. Involved in stress responses. Plays a repressive role in cell expansion by counteracting the positive role of CPR5 in this process, but does not regulate cell proliferation or endoreduplication. The chain is GLABROUS1 enhancer-binding protein-like 3 from Arabidopsis thaliana (Mouse-ear cress).